A 329-amino-acid polypeptide reads, in one-letter code: GTP 3',8-cyclase (329 aa).

Residues 8 to 234 (AFARKFYYLR…QLRQRSDGPA (227 aa)) enclose the Radical SAM core domain. Arg-17 is a GTP binding site. Cys-24 and Cys-28 together coordinate [4Fe-4S] cluster. An S-adenosyl-L-methionine-binding site is contributed by Tyr-30. Cys-31 is a binding site for [4Fe-4S] cluster. Arg-68 serves as a coordination point for GTP. Residue Gly-72 coordinates S-adenosyl-L-methionine. Thr-99 lines the GTP pocket. Ser-123 provides a ligand contact to S-adenosyl-L-methionine. Lys-160 contacts GTP. Met-194 is a binding site for S-adenosyl-L-methionine. The [4Fe-4S] cluster site is built by Cys-257 and Cys-260. 262-264 (RLR) contributes to the GTP binding site. Cys-274 lines the [4Fe-4S] cluster pocket.

The protein belongs to the radical SAM superfamily. MoaA family. Monomer and homodimer. Requires [4Fe-4S] cluster as cofactor.

The enzyme catalyses GTP + AH2 + S-adenosyl-L-methionine = (8S)-3',8-cyclo-7,8-dihydroguanosine 5'-triphosphate + 5'-deoxyadenosine + L-methionine + A + H(+). Its pathway is cofactor biosynthesis; molybdopterin biosynthesis. Functionally, catalyzes the cyclization of GTP to (8S)-3',8-cyclo-7,8-dihydroguanosine 5'-triphosphate. The polypeptide is GTP 3',8-cyclase (Shigella dysenteriae serotype 1 (strain Sd197)).